Here is a 403-residue protein sequence, read N- to C-terminus: S-adenosylmethionine synthase (403 aa).

His-16 is a binding site for ATP. Asp-18 contributes to the Mg(2+) binding site. A K(+)-binding site is contributed by Glu-44. Residues Glu-57 and Gln-100 each coordinate L-methionine. Residues 100 to 110 form a flexible loop region; sequence QSPDIAQGVDR. A disordered region spans residues 106–126; sequence QGVDRSYESRSGSASTDAHDL. ATP is bound by residues 176–178, 248–249, Asp-257, 263–264, Ala-280, and Lys-284; these read DGK, KF, and RK. Asp-257 contacts L-methionine. An L-methionine-binding site is contributed by Lys-288.

Belongs to the AdoMet synthase family. Homotetramer; dimer of dimers. The cofactor is Mg(2+). K(+) is required as a cofactor.

It localises to the cytoplasm. The catalysed reaction is L-methionine + ATP + H2O = S-adenosyl-L-methionine + phosphate + diphosphate. The protein operates within amino-acid biosynthesis; S-adenosyl-L-methionine biosynthesis; S-adenosyl-L-methionine from L-methionine: step 1/1. Its function is as follows. Catalyzes the formation of S-adenosylmethionine (AdoMet) from methionine and ATP. The overall synthetic reaction is composed of two sequential steps, AdoMet formation and the subsequent tripolyphosphate hydrolysis which occurs prior to release of AdoMet from the enzyme. This is S-adenosylmethionine synthase from Clavibacter sepedonicus (Clavibacter michiganensis subsp. sepedonicus).